A 733-amino-acid polypeptide reads, in one-letter code: 1,4-alpha-glucan branching enzyme GlgB (733 aa).

Aspartate 413 serves as the catalytic Nucleophile. Glutamate 466 acts as the Proton donor in catalysis.

This sequence belongs to the glycosyl hydrolase 13 family. GlgB subfamily. As to quaternary structure, monomer.

It carries out the reaction Transfers a segment of a (1-&gt;4)-alpha-D-glucan chain to a primary hydroxy group in a similar glucan chain.. Its pathway is glycan biosynthesis; glycogen biosynthesis. Catalyzes the formation of the alpha-1,6-glucosidic linkages in glycogen by scission of a 1,4-alpha-linked oligosaccharide from growing alpha-1,4-glucan chains and the subsequent attachment of the oligosaccharide to the alpha-1,6 position. This chain is 1,4-alpha-glucan branching enzyme GlgB, found in Leifsonia xyli subsp. xyli (strain CTCB07).